Reading from the N-terminus, the 139-residue chain is Trafficking protein particle complex subunit 2-like protein (139 aa).

The protein belongs to the TRAPP small subunits family. Sedlin subfamily. As to quaternary structure, component of the multisubunit TRAPP (transport protein particle) complex, which includes at least TRAPPC2, TRAPPC2L, TRAPPC3, TRAPPC3L, TRAPPC4, TRAPPC5, TRAPPC8, TRAPPC9, TRAPPC10, TRAPPC11 and TRAPPC12. Interacts with the heterodimer TRAPPC3-TRAPPC6A.

The protein resides in the cytoplasm. It is found in the perinuclear region. Its subcellular location is the endoplasmic reticulum. The protein localises to the golgi apparatus. Its function is as follows. May play a role in vesicular transport from endoplasmic reticulum to Golgi. The protein is Trafficking protein particle complex subunit 2-like protein (Trappc2l) of Mus musculus (Mouse).